The following is a 146-amino-acid chain: uncharacterized protein (146 aa).

Residues 9 to 141 (VADIEKSLRH…FEKSLMKLQH (133 aa)) form the HTH marR-type domain. The H-T-H motif DNA-binding region spans 55–78 (IGELSGKMYLACSTTTDLIDRMQK).

This is an uncharacterized protein from Bacillus subtilis (strain 168).